Reading from the N-terminus, the 198-residue chain is Elongation factor Ts (198 aa).

An involved in Mg(2+) ion dislocation from EF-Tu region spans residues 81–84; the sequence is TDFV.

The protein belongs to the EF-Ts family.

It localises to the cytoplasm. Functionally, associates with the EF-Tu.GDP complex and induces the exchange of GDP to GTP. It remains bound to the aminoacyl-tRNA.EF-Tu.GTP complex up to the GTP hydrolysis stage on the ribosome. The sequence is that of Elongation factor Ts from Dictyoglomus thermophilum (strain ATCC 35947 / DSM 3960 / H-6-12).